The primary structure comprises 368 residues: MNKTITALAILMASFAANASVLPETPVPFKSGTGAIDNDTVYIGLGSAGTAWYKLETQAKDKKWTALAAFPGGPRDQATSAFIDGNLYVFGGIGKNSEGLTQVFNDVHKYNPKTNSWVKLISHAPMGMAGHVTFVHNGKAYVTGGVNQNIFNGYFEDLNEAGKDSTAVDKINAHYFDKKAEDYFFNKFLLSFDPSTQQWSYAGESPWYGTAGAAVVNKGDKTWLINGEAKPGLRTDAVFELDFTGNNLKWNRLAPVSSPDGVAGGFAGISNDSLIFAGGAGFKGSRENYQNGKNYAHEGLKKSYSTDIHLWHNGKWDKSGELSQGRAYGVSLPWNNSLLIIGGETAGGKAVTDSVLISVKDNKVTVQN.

The signal sequence occupies residues 1–19 (MNKTITALAILMASFAANA). 7 Kelch repeats span residues 40 to 84 (TVYI…AFID), 86 to 137 (NLYV…FVHN), 139 to 173 (KAYV…KINA), 174 to 219 (HYFD…VNKG), 222 to 265 (TWLI…VAGG), 287 to 336 (ENYQ…PWNN), and 338 to 367 (LLII…VTVQ). Residue Glu228 is the Proton acceptor of the active site.

This sequence belongs to the NanM family. In terms of assembly, homodimer.

It is found in the periplasm. The catalysed reaction is N-acetyl-alpha-neuraminate = N-acetyl-beta-neuraminate. In terms of biological role, converts alpha-N-acetylneuranimic acid (Neu5Ac) to the beta-anomer, accelerating the equilibrium between the alpha- and beta-anomers. Probably facilitates sialidase-negative bacteria to compete successfully for limited amounts of extracellular Neu5Ac, which is likely taken up in the beta-anomer. In addition, the rapid removal of sialic acid from solution might be advantageous to the bacterium to damp down host responses. This Escherichia coli O157:H7 protein is N-acetylneuraminate epimerase.